The primary structure comprises 349 residues: Green-sensitive opsin-4 (349 aa).

Residues 1 to 36 (MNGTEGNNFYIPLSNRTGLARSPYEYPQYYLAEPWQ) are Extracellular-facing. Residues Asn-2 and Asn-15 are each glycosylated (N-linked (GlcNAc...) asparagine). A helical transmembrane segment spans residues 37–61 (FKLLAVYMFFLICLGFPINGLTLLV). Residues 62–73 (TAQHKKLRQPLN) are Cytoplasmic-facing. Residues 74–99 (FILVNLAVAGTIMVCFGFTVTFYTAI) traverse the membrane as a helical segment. Over 100–113 (NGYFVLGPTGCAIE) the chain is Extracellular. A disulfide bridge connects residues Cys-110 and Cys-187. A helical membrane pass occupies residues 114–133 (GFMATLGGEVALWSLVVLAV). The Cytoplasmic portion of the chain corresponds to 134–152 (ERYIVVCKPMGSFKFSASH). Residues 153 to 176 (AFAGCAFTWVMAMACAAPPLVGWS) traverse the membrane as a helical segment. Residues 177–202 (RYIPEGMQCSCGPDYYTLNPEYNNES) are Extracellular-facing. The N-linked (GlcNAc...) asparagine glycan is linked to Asn-200. Residues 203 to 230 (YVLYMFICHFILPVTIIFFTYGRLVCTV) form a helical membrane-spanning segment. The Cytoplasmic portion of the chain corresponds to 231 to 252 (KAAAAQQQESESTQKAEREVTR). The helical transmembrane segment at 253 to 276 (MVILMVLGFLIAWTPYATVAAWIF) threads the bilayer. Residues 277–284 (FNKGAAFS) are Extracellular-facing. A helical transmembrane segment spans residues 285–309 (AQFMAVPAFFSKTSALYNPVIYVLL). N6-(retinylidene)lysine is present on Lys-296. Topologically, residues 310–349 (NKQFRNCMLTTLFCGKNPLGDDESSTVSTSKTEVSSVSPA) are cytoplasmic. Residues 329–349 (GDDESSTVSTSKTEVSSVSPA) are disordered. Low complexity predominate over residues 334–349 (STVSTSKTEVSSVSPA).

This sequence belongs to the G-protein coupled receptor 1 family. Opsin subfamily. Phosphorylated on some or all of the serine and threonine residues present in the C-terminal region. Retinal double cone accessory photoreceptor cell outer segments.

The protein resides in the membrane. In terms of biological role, visual pigments are the light-absorbing molecules that mediate vision. They consist of an apoprotein, opsin, covalently linked to cis-retinal. In Danio rerio (Zebrafish), this protein is Green-sensitive opsin-4 (opn1mw4).